The following is a 180-amino-acid chain: Ribosome-recycling factor (180 aa).

Belongs to the RRF family.

The protein resides in the cytoplasm. Its function is as follows. Responsible for the release of ribosomes from messenger RNA at the termination of protein biosynthesis. May increase the efficiency of translation by recycling ribosomes from one round of translation to another. The sequence is that of Ribosome-recycling factor from Chlamydia abortus (strain DSM 27085 / S26/3) (Chlamydophila abortus).